The sequence spans 377 residues: Nitric oxide reductase FlRd-NAD(+) reductase (377 aa).

This sequence belongs to the FAD-dependent oxidoreductase family. Requires FAD as cofactor.

It is found in the cytoplasm. The catalysed reaction is 2 reduced [nitric oxide reductase rubredoxin domain] + NAD(+) + H(+) = 2 oxidized [nitric oxide reductase rubredoxin domain] + NADH. It participates in nitrogen metabolism; nitric oxide reduction. One of at least two accessory proteins for anaerobic nitric oxide (NO) reductase. Reduces the rubredoxin moiety of NO reductase. The chain is Nitric oxide reductase FlRd-NAD(+) reductase from Salmonella paratyphi A (strain AKU_12601).